A 190-amino-acid chain; its full sequence is MLLSDRDLRAEITAGRFSIDPFDDTLVQPSSIDVRLDCMFRVFNNTRYTHIDPARQQDELTSLVELVDGEPFVLHPGGFVLGSTLELFTLPEDLAGRLEGKSSLGRLGLLTHSTAGFIDPGFCGHITLELSNVANLPITLWPGMKIGQLCVLRLTSPAEHPYGSASAGSKYQGQRGPTPSRSYENFIKNT.

DCTP is bound by residues 101-106, Asp-119, 127-129, Gln-148, Tyr-162, and Gln-174; these read KSSLGR and TLE. Residue Glu-129 is the Proton donor/acceptor of the active site. Residues 162-190 form a disordered region; that stretch reads YGSASAGSKYQGQRGPTPSRSYENFIKNT. The span at 166 to 190 shows a compositional bias: polar residues; that stretch reads SAGSKYQGQRGPTPSRSYENFIKNT.

This sequence belongs to the dCTP deaminase family. As to quaternary structure, homotrimer.

It catalyses the reaction dCTP + 2 H2O = dUMP + NH4(+) + diphosphate. Its pathway is pyrimidine metabolism; dUMP biosynthesis; dUMP from dCTP: step 1/1. Its function is as follows. Bifunctional enzyme that catalyzes both the deamination of dCTP to dUTP and the hydrolysis of dUTP to dUMP without releasing the toxic dUTP intermediate. In Mycobacterium leprae (strain Br4923), this protein is dCTP deaminase, dUMP-forming.